Here is a 391-residue protein sequence, read N- to C-terminus: Putative gustatory receptor 98a (391 aa).

At 1-31 the chain is on the cytoplasmic side; sequence MEQMSGELHAASLLYMRRLMKCLGMLPFGQN. A helical transmembrane segment spans residues 32–52; it reads LFSKGFCYVLLFVSLGFSSYW. The Extracellular segment spans residues 53-74; sequence RFSFDYEFDYDFLNDRFSSTID. A helical transmembrane segment spans residues 75-95; the sequence is LSNFVALVLGHAIIVLELLWG. Residues 96-128 are Cytoplasmic-facing; it reads NCSKDVDRQLQAIHSQIKLQLGTSNSTDRVRRY. Residues 129–149 form a helical membrane-spanning segment; the sequence is CNWIYGSLIIRWLIFIVVTIY. Over 150–173 the chain is Extracellular; it reads SNRALTINATYSELVFLARFSEFT. N157 carries N-linked (GlcNAc...) asparagine glycosylation. A helical membrane pass occupies residues 174–194; that stretch reads LYCAVILFIYQELIVGGSNVL. The Cytoplasmic segment spans residues 195–239; sequence DELYRTRYEMWSIRRLSLQKLAKLQAIHNSLWQAIRCLECYFQLS. Residues 240 to 260 traverse the membrane as a helical segment; the sequence is LITLLMKFFIDTSALPYWLYL. The Extracellular segment spans residues 261–272; that stretch reads SRVEHTRVAVQH. The chain crosses the membrane as a helical span at residues 273-293; it reads YVATVECIKLLEIVVPCYLCT. Over 294–347 the chain is Cytoplasmic; that stretch reads RCDAMQRKFLSMFYTVTTDRRSSQLNAALRSLNLQLSQEKYKFSAGGMVDINTE. A helical transmembrane segment spans residues 348-368; sequence MLGKFFFGMISYIVICIQFSI. Topologically, residues 369–391 are extracellular; the sequence is NFRAKKMSNEQMSQNITSTSAPI. N-linked (GlcNAc...) asparagine glycosylation is present at N383.

This sequence belongs to the insect chemoreceptor superfamily. Gustatory receptor (GR) family. Gr2a subfamily.

It is found in the cell membrane. Functionally, probable gustatory receptor which mediates acceptance or avoidance behavior, depending on its substrates. This Drosophila melanogaster (Fruit fly) protein is Putative gustatory receptor 98a (Gr98a).